Consider the following 874-residue polypeptide: Alanine--tRNA ligase (874 aa).

Zn(2+) is bound by residues H563, H567, C665, and H669.

It belongs to the class-II aminoacyl-tRNA synthetase family. Zn(2+) is required as a cofactor.

The protein resides in the cytoplasm. It catalyses the reaction tRNA(Ala) + L-alanine + ATP = L-alanyl-tRNA(Ala) + AMP + diphosphate. Catalyzes the attachment of alanine to tRNA(Ala) in a two-step reaction: alanine is first activated by ATP to form Ala-AMP and then transferred to the acceptor end of tRNA(Ala). Also edits incorrectly charged Ser-tRNA(Ala) and Gly-tRNA(Ala) via its editing domain. In Histophilus somni (strain 129Pt) (Haemophilus somnus), this protein is Alanine--tRNA ligase.